A 293-amino-acid polypeptide reads, in one-letter code: Ribonuclease HIII (293 aa).

Positions 78–293 constitute an RNase H type-2 domain; it reads LPLIGTDEVG…TEKAKKRLER (216 aa). Residues Asp-84, Glu-85, and Asp-187 each coordinate a divalent metal cation.

Belongs to the RNase HII family. RnhC subfamily. The cofactor is Mn(2+). Mg(2+) is required as a cofactor.

It localises to the cytoplasm. It carries out the reaction Endonucleolytic cleavage to 5'-phosphomonoester.. Functionally, endonuclease that specifically degrades the RNA of RNA-DNA hybrids. The sequence is that of Ribonuclease HIII from Streptococcus pneumoniae (strain JJA).